We begin with the raw amino-acid sequence, 389 residues long: S-adenosylmethionine synthase (389 aa).

His15 is an ATP binding site. Asp17 serves as a coordination point for Mg(2+). Glu43 provides a ligand contact to K(+). 2 residues coordinate L-methionine: Glu56 and Gln99. A flexible loop region spans residues 99 to 109; that stretch reads QSSDIQYSIDH. ATP-binding positions include 166–168, 232–233, Asp241, 247–248, Ser264, and Lys268; these read DAK, RF, and RK. Asp241 is an L-methionine binding site. Position 272 (Lys272) interacts with L-methionine.

It belongs to the AdoMet synthase family. In terms of assembly, homotetramer; dimer of dimers. Mg(2+) serves as cofactor. K(+) is required as a cofactor.

The protein resides in the cytoplasm. It carries out the reaction L-methionine + ATP + H2O = S-adenosyl-L-methionine + phosphate + diphosphate. It participates in amino-acid biosynthesis; S-adenosyl-L-methionine biosynthesis; S-adenosyl-L-methionine from L-methionine: step 1/1. Its function is as follows. Catalyzes the formation of S-adenosylmethionine (AdoMet) from methionine and ATP. The overall synthetic reaction is composed of two sequential steps, AdoMet formation and the subsequent tripolyphosphate hydrolysis which occurs prior to release of AdoMet from the enzyme. The polypeptide is S-adenosylmethionine synthase (Blochmanniella pennsylvanica (strain BPEN)).